The sequence spans 681 residues: T-box brain protein 1 (681 aa).

Disordered stretches follow at residues 43-83 and 108-127; these read TDNL…RSKL and SQSS…FPYP. Residues 58–68 show a composition bias toward polar residues; it reads GMTNQSDTDNF. The segment covering 108-122 has biased composition (low complexity); that stretch reads SQSSQPQSAATAPSA. A DNA-binding region (T-box) is located at residues 213–393; it reads LWLKFHRHQT…HNPFAKGFRD (181 aa). The residue at position 408 (Thr408) is a Phosphothreonine. Ser410 is modified (phosphoserine). Residues 447–483 form a disordered region; sequence PGAGAGPGPGTDRSVPHTNGLLSPQQAEDPGAPSPQR. A compositionally biased stretch (polar residues) spans 462 to 472; the sequence is PHTNGLLSPQQ. Residue Ser594 is modified to Phosphoserine. The interval 597 to 655 is disordered; that stretch reads APAAEDAKPKDLSDSSWIETPSSIKSIDSSDSGIYEQAKRRRISPADTPVSESSSPLKS. Residues 618–628 show a composition bias toward low complexity; that stretch reads SSIKSIDSSDS. Residue Ser640 is modified to Phosphoserine.

In terms of assembly, homodimer. Part of a complex containing CASK, TBR1 and TSPYL2; may modulate gene expression in response to neuronal synaptic activity. Forms homodimers. Interacts with FOXP2. Interacts with FOXP1. Interacts with BCL11A. In terms of tissue distribution, expressed in the developing and adult cortex. Expressed in the olfactory bulbs.

The protein resides in the nucleus. In terms of biological role, transcriptional repressor involved in multiple aspects of cortical development, including neuronal migration, laminar and areal identity, and axonal projection. As transcriptional repressor of FEZF2, it blocks the formation of the corticospinal (CS) tract from layer 6 projection neurons, thereby restricting the origin of CS axons specifically to layer 5 neurons. In Mus musculus (Mouse), this protein is T-box brain protein 1 (Tbr1).